The following is a 155-amino-acid chain: Ribosomal RNA large subunit methyltransferase H (155 aa).

S-adenosyl-L-methionine is bound by residues Leu-72, Gly-103, and Leu-122–Leu-127.

This sequence belongs to the RNA methyltransferase RlmH family. Homodimer.

The protein resides in the cytoplasm. The catalysed reaction is pseudouridine(1915) in 23S rRNA + S-adenosyl-L-methionine = N(3)-methylpseudouridine(1915) in 23S rRNA + S-adenosyl-L-homocysteine + H(+). In terms of biological role, specifically methylates the pseudouridine at position 1915 (m3Psi1915) in 23S rRNA. The sequence is that of Ribosomal RNA large subunit methyltransferase H from Aeromonas hydrophila subsp. hydrophila (strain ATCC 7966 / DSM 30187 / BCRC 13018 / CCUG 14551 / JCM 1027 / KCTC 2358 / NCIMB 9240 / NCTC 8049).